The following is a 353-amino-acid chain: UPF0324 membrane protein PP_3661 (353 aa).

The next 8 helical transmembrane spans lie at 20-42 (LNGI…MPAI), 70-92 (ASWA…AFFG), 105-127 (WSGL…WCGM), 137-159 (ALLT…ESAL), 166-188 (SAMA…PLAI), 234-253 (MTRV…WISR), 266-288 (IAMP…QVLP), and 326-348 (ALAT…TLGV).

This sequence belongs to the UPF0324 family.

It is found in the cell membrane. The polypeptide is UPF0324 membrane protein PP_3661 (Pseudomonas putida (strain ATCC 47054 / DSM 6125 / CFBP 8728 / NCIMB 11950 / KT2440)).